We begin with the raw amino-acid sequence, 184 residues long: Ribosome-recycling factor (184 aa).

This sequence belongs to the RRF family.

The protein resides in the cytoplasm. In terms of biological role, responsible for the release of ribosomes from messenger RNA at the termination of protein biosynthesis. May increase the efficiency of translation by recycling ribosomes from one round of translation to another. In Stenotrophomonas maltophilia (strain K279a), this protein is Ribosome-recycling factor.